A 144-amino-acid polypeptide reads, in one-letter code: Phospholipase A2, membrane associated (144 aa).

Positions 1–20 are cleaved as a signal peptide; it reads MKTLLLLAVIMAIGLLQVHG. Disulfide bonds link C46-C137, C48-C64, C63-C117, C69-C144, C70-C110, C79-C103, and C97-C108. Ca(2+) contacts are provided by Y47, G49, and S51. Residue H67 is part of the active site. Position 68 (D68) interacts with Ca(2+). Residue D111 is part of the active site.

This sequence belongs to the phospholipase A2 family. The cofactor is Ca(2+).

The protein localises to the secreted. It localises to the cell membrane. Its subcellular location is the mitochondrion outer membrane. The enzyme catalyses a 1,2-diacyl-sn-glycero-3-phosphoethanolamine + H2O = a 1-acyl-sn-glycero-3-phosphoethanolamine + a fatty acid + H(+). The catalysed reaction is 1-hexadecanoyl-2-(9Z-octadecenoyl)-sn-glycero-3-phosphoethanolamine + H2O = 1-hexadecanoyl-sn-glycero-3-phosphoethanolamine + (9Z)-octadecenoate + H(+). It carries out the reaction 1-hexadecanoyl-2-(9Z,12Z-octadecadienoyl)-sn-glycero-3-phosphoethanolamine + H2O = 1-hexadecanoyl-sn-glycero-3-phosphoethanolamine + (9Z,12Z)-octadecadienoate + H(+). It catalyses the reaction 1-hexadecanoyl-2-(5Z,8Z,11Z,14Z-eicosatetraenoyl)-sn-glycero-3-phosphoethanolamine + H2O = 1-hexadecanoyl-sn-glycero-3-phosphoethanolamine + (5Z,8Z,11Z,14Z)-eicosatetraenoate + H(+). The enzyme catalyses N-hexadecanoyl-1,2-di-(9Z-octadecenoyl)-sn-glycero-3-phosphoethanolamine + H2O = N-hexadecanoyl-1-(9Z-octadecenoyl)-sn-glycero-3-phosphoethanolamine + (9Z)-octadecenoate + H(+). The catalysed reaction is 1,2-dihexadecanoyl-sn-glycero-3-phospho-(1'-sn-glycerol) + H2O = 1-hexadecanoyl-sn-glycero-3-phospho-(1'-sn-glycerol) + hexadecanoate + H(+). It carries out the reaction 1-hexadecanoyl-2-(9Z-octadecenoyl)-sn-glycero-3-phosphoglycerol + H2O = 1-hexadecanoyl-sn-glycero-3-phosphoglycerol + (9Z)-octadecenoate + H(+). It catalyses the reaction 1-hexadecanoyl-2-(9Z-octadecenoyl)-sn-glycero-3-phospho-(1'-sn-glycerol) + H2O = 1-hexadecanoyl-sn-glycero-3-phospho-(1'-sn-glycerol) + (9Z)-octadecenoate + H(+). The enzyme catalyses a 1,2-diacyl-sn-glycero-3-phosphocholine + H2O = a 1-acyl-sn-glycero-3-phosphocholine + a fatty acid + H(+). The catalysed reaction is 1,2-dihexadecanoyl-sn-glycero-3-phosphocholine + H2O = 1-hexadecanoyl-sn-glycero-3-phosphocholine + hexadecanoate + H(+). It carries out the reaction 1-hexadecanoyl-2-(9Z-octadecenoyl)-sn-glycero-3-phosphocholine + H2O = 1-hexadecanoyl-sn-glycero-3-phosphocholine + (9Z)-octadecenoate + H(+). It catalyses the reaction 1-hexadecanoyl-2-(9Z,12Z-octadecadienoyl)-sn-glycero-3-phosphocholine + H2O = (9Z,12Z)-octadecadienoate + 1-hexadecanoyl-sn-glycero-3-phosphocholine + H(+). The enzyme catalyses 1-hexadecanoyl-2-(4Z,7Z,10Z,13Z,16Z,19Z-docosahexaenoyl)-sn-glycero-3-phosphocholine + H2O = (4Z,7Z,10Z,13Z,16Z,19Z)-docosahexaenoate + 1-hexadecanoyl-sn-glycero-3-phosphocholine + H(+). Secretory calcium-dependent phospholipase A2 that primarily targets extracellular phospholipids with implications in host antimicrobial defense, inflammatory response and tissue regeneration. Hydrolyzes the ester bond of the fatty acyl group attached at sn-2 position of phospholipids (phospholipase A2 activity) with preference for phosphatidylethanolamines and phosphatidylglycerols over phosphatidylcholines. Contributes to lipid remodeling of cellular membranes and generation of lipid mediators involved in pathogen clearance. Displays bactericidal activity against Gram-positive bacteria by directly hydrolyzing phospholipids of the bacterial membrane. Upon sterile inflammation, targets membrane phospholipids of extracellular mitochondria released from activated platelets, generating free unsaturated fatty acids such as arachidonate that is used by neighboring leukocytes to synthesize inflammatory eicosanoids such as leukotrienes. Simultaneously, by compromising mitochondrial membrane integrity, promotes the release in circulation of potent damage-associated molecular pattern molecules that activate the innate immune response. Plays a stem cell regulator role in the intestinal crypt. Within intracellular compartment mediates Paneth cell differentiation and its stem cell supporting functions by inhibiting Wnt signaling pathway in intestinal stem cell (ICS). Secreted in the intestinal lumen upon inflammation, acts in an autocrine way and promotes prostaglandin E2 synthesis that stimulates Wnt signaling pathway in ICS cells and tissue regeneration. May play a role in the biosynthesis of N-acyl ethanolamines that regulate energy metabolism and inflammation. Hydrolyzes N-acyl phosphatidylethanolamines to N-acyl lysophosphatidylethanolamines, which are further cleaved by a lysophospholipase D to release N-acyl ethanolamines. Independent of its catalytic activity, acts as a ligand for integrins. Binds to and activates integrins ITGAV:ITGB3, ITGA4:ITGB1 and ITGA5:ITGB1. Binds to a site (site 2) which is distinct from the classical ligand-binding site (site 1) and induces integrin conformational changes and enhanced ligand binding to site 1. Induces cell proliferation in an integrin-dependent manner. The sequence is that of Phospholipase A2, membrane associated (PLA2G2A) from Bos taurus (Bovine).